A 445-amino-acid polypeptide reads, in one-letter code: Exodeoxyribonuclease 7 large subunit (445 aa).

This sequence belongs to the XseA family. In terms of assembly, heterooligomer composed of large and small subunits.

It localises to the cytoplasm. The enzyme catalyses Exonucleolytic cleavage in either 5'- to 3'- or 3'- to 5'-direction to yield nucleoside 5'-phosphates.. In terms of biological role, bidirectionally degrades single-stranded DNA into large acid-insoluble oligonucleotides, which are then degraded further into small acid-soluble oligonucleotides. The chain is Exodeoxyribonuclease 7 large subunit from Staphylococcus aureus (strain USA300 / TCH1516).